A 377-amino-acid chain; its full sequence is Probable transposase for insertion sequence element IS5377 (377 aa).

The protein belongs to the transposase 11 family.

In Geobacillus stearothermophilus (Bacillus stearothermophilus), this protein is Probable transposase for insertion sequence element IS5377.